Here is a 120-residue protein sequence, read N- to C-terminus: Seripauperin-24 (120 aa).

The N-terminal stretch at M1–A20 is a signal peptide.

This sequence belongs to the SRP1/TIP1 family. Seripauperin subfamily. O-glycosylated.

It is found in the secreted. The protein resides in the cell wall. In terms of biological role, component of the cell wall. The sequence is that of Seripauperin-24 (PAU24) from Saccharomyces cerevisiae (strain ATCC 204508 / S288c) (Baker's yeast).